The primary structure comprises 296 residues: AUGMIN subunit 2 (296 aa).

2 coiled-coil regions span residues 56–83 and 253–285; these read DDLI…QGRK and AVHK…NRRL. The tract at residues 218 to 296 is disordered; that stretch reads AVSLPTTPGG…WPPSVKKSSV (79 aa). Over residues 264-277 the composition is skewed to acidic residues; that stretch reads QNEEEEEEEEEEDG.

Belongs to the HAUS2 family. As to quaternary structure, part of the augmin complex composed of 8 subunits. The complex acts on microtubules and interacts with gamma-tubulin in spindles and the phragmoplast.

Contributes to the assembly of the acentrosomal spindle and phragmoplast microtubule arrays as part of the augmin complex. The chain is AUGMIN subunit 2 from Arabidopsis thaliana (Mouse-ear cress).